The following is a 153-amino-acid chain: Probable trafficking protein particle complex subunit 2 (153 aa).

Belongs to the TRAPP small subunits family. Sedlin subfamily. In terms of assembly, part of the multisubunit TRAPP (transport protein particle) complex.

Its subcellular location is the cytoplasm. It localises to the perinuclear region. The protein localises to the endoplasmic reticulum. The protein resides in the golgi apparatus. In terms of biological role, may play a role in vesicular transport from endoplasmic reticulum to Golgi. The protein is Probable trafficking protein particle complex subunit 2 of Nematostella vectensis (Starlet sea anemone).